We begin with the raw amino-acid sequence, 705 residues long: Phosphoribosylformylglycinamidine synthase subunit PurL (705 aa).

Residue H32 is part of the active site. Y35 provides a ligand contact to ATP. E76 lines the Mg(2+) pocket. Substrate contacts are provided by residues S77 to H80 and R99. The active-site Proton acceptor is the H78. Mg(2+) is bound at residue D100. Q224 is a binding site for substrate. Residue D252 coordinates Mg(2+). E296–Q298 is a substrate binding site. 2 residues coordinate ATP: D471 and G508. Position 509 (N509) interacts with Mg(2+). Substrate is bound at residue S511.

Belongs to the FGAMS family. As to quaternary structure, monomer. Part of the FGAM synthase complex composed of 1 PurL, 1 PurQ and 2 PurS subunits.

It localises to the cytoplasm. The enzyme catalyses N(2)-formyl-N(1)-(5-phospho-beta-D-ribosyl)glycinamide + L-glutamine + ATP + H2O = 2-formamido-N(1)-(5-O-phospho-beta-D-ribosyl)acetamidine + L-glutamate + ADP + phosphate + H(+). Its pathway is purine metabolism; IMP biosynthesis via de novo pathway; 5-amino-1-(5-phospho-D-ribosyl)imidazole from N(2)-formyl-N(1)-(5-phospho-D-ribosyl)glycinamide: step 1/2. Part of the phosphoribosylformylglycinamidine synthase complex involved in the purines biosynthetic pathway. Catalyzes the ATP-dependent conversion of formylglycinamide ribonucleotide (FGAR) and glutamine to yield formylglycinamidine ribonucleotide (FGAM) and glutamate. The FGAM synthase complex is composed of three subunits. PurQ produces an ammonia molecule by converting glutamine to glutamate. PurL transfers the ammonia molecule to FGAR to form FGAM in an ATP-dependent manner. PurS interacts with PurQ and PurL and is thought to assist in the transfer of the ammonia molecule from PurQ to PurL. The protein is Phosphoribosylformylglycinamidine synthase subunit PurL of Pyrococcus horikoshii (strain ATCC 700860 / DSM 12428 / JCM 9974 / NBRC 100139 / OT-3).